The chain runs to 762 residues: MAIQTSNLGYPRIGLQREWKKTLEAFWSNKIDEEQFLTTMKEIRLKHVKAQQEKGIELIPIGDFTYYDHVLDTAYMLGFIPSRFSEFTSYLDVYFAMARGSKDHVASEMTKWFNTNYHYIVPEYEEGLQISLKDNRPLRLYEEAKQELGVDGKPVILGPYTFLKLAKGYTQEQFATILKQLVAPYVQLLSELHAAGAQIIQVDEPIFASLTKEEVQQAKEIYEAIRKEVPNANLLLQTYFDSVEENYEEIITFPVSSIGLDFIHGKEGNLHAISKYGFPADKTLAVGCIDGRNIWRADLDEVLTLFTTLQKQVQTKNFIVQPSCSLLHTPIDKTEETHLSTELFDALAFANQKLEELVLIHSALTQGTESIRNELETYRNVHHTIRSSAARNREDVKAARTALKEEDFSRPLPFEKRYELQQVALKLPLLPTTTIGSFPQTTEVRQTRKEWRNGVISNEQYEQFIEKETEKWIRYQEEIGLDVLVHGEFERTDMVEYFGERLAGFSFTKNGWVQSYGSRCVKPPVIYGDVAFINGMTIKETVYAQSLTEKVVKGMLTGPVTILNWSFVRNDIPRKEVSYQIALALRHEIELLESSGIRVIQVDEPALREGMPLKEKDWDAYITWAVQSFLLATSSVANETQIHTHMCYSNFEDIVDAIRALDADVISIETSRSHGEFIDTLKHTTYEKGIGLGVYDIHSPRVPSKDEMYKIVEQSLKVCDPKYFWINPDCGLKTRRTEEVIPALEHMVQAAKDARSLLKTNA.

5-methyltetrahydropteroyltri-L-glutamate-binding positions include 17 to 20 (REWK) and Lys111. L-homocysteine contacts are provided by residues 435–437 (IGS) and Glu488. Residues 435-437 (IGS) and Glu488 contribute to the L-methionine site. 5-methyltetrahydropteroyltri-L-glutamate is bound by residues 519–520 (RC) and Trp565. Asp603 provides a ligand contact to L-homocysteine. Asp603 is an L-methionine binding site. Glu609 provides a ligand contact to 5-methyltetrahydropteroyltri-L-glutamate. Zn(2+) is bound by residues His645, Cys647, and Glu669. Residue His698 is the Proton donor of the active site. Residue Cys730 participates in Zn(2+) binding.

This sequence belongs to the vitamin-B12 independent methionine synthase family. Requires Zn(2+) as cofactor.

The catalysed reaction is 5-methyltetrahydropteroyltri-L-glutamate + L-homocysteine = tetrahydropteroyltri-L-glutamate + L-methionine. Its pathway is amino-acid biosynthesis; L-methionine biosynthesis via de novo pathway; L-methionine from L-homocysteine (MetE route): step 1/1. In terms of biological role, catalyzes the transfer of a methyl group from 5-methyltetrahydrofolate to homocysteine resulting in methionine formation. This is 5-methyltetrahydropteroyltriglutamate--homocysteine methyltransferase from Bacillus cereus (strain AH187).